The primary structure comprises 70 residues: Probable rubredoxin HupI (70 aa).

The 52-residue stretch at 15–66 (DDRMECGICWHVYDPAEGDPVWQIPPGTPFSNLTEDWRCPNCDALQSKFMRL) folds into the Rubredoxin-like domain. Fe cation-binding residues include Cys20, Cys23, Cys53, and Cys56.

It belongs to the rubredoxin family. Fe(3+) is required as a cofactor.

In terms of biological role, could be an electron transport intermediate in hydrogen oxidation. The polypeptide is Probable rubredoxin HupI (hupI) (Rhizobium leguminosarum bv. viciae).